Reading from the N-terminus, the 267-residue chain is MFRMLSSSFEDDPFFADSFLAHRESMRNMMRSFSEPLGRDLLSISDGRGRTHNRRERDDGEDSLTHADVNPFQTMDRMMANMRSGIQELQRNFGQLSMDPNGHSFCSSSVMTYSKVGDEPPKVFQASTQTRRAPGGVKETRKAMRDSDSGLERMAVGHHIHDRGHVIRKSKNNKTGDEEVNQEFINMNESDAHAFDDEWQNEVLKYKSIGRSGNTGMRSVGHEHPGSRELKRREKIHRNSAIESGRRSNVFVDKLNVKGSPVKITKK.

A phosphoserine mark is found at S6, S8, S32, and S34. The segment at R39–A67 is disordered. The segment at R50–Q125 is interaction with COPS3.

This sequence belongs to the MLF family. In terms of assembly, interacts with CENPU. Also interacts with NRBP1/MADM, YWHAZ/14-3-3-zeta and HNRPUL2/MANP. NRBP1 recruits a serine kinase which phosphorylates both itself and MLF1. Phosphorylated MLF1 then binds to YWHAZ and is retained in the cytoplasm. Retained in the nucleus by binding to HNRPUL2. Binds to COPS3/CSN3 which is required for suppression of COP1 and activation of p53. Phosphorylation is required for binding to YWHAZ. Highly expressed in skeletal muscle, heart, testis. Also found in lung, but not in spleen, thymus, bone marrow, liver and kidney.

Its subcellular location is the cytoplasm. The protein resides in the nucleus. It localises to the cell projection. It is found in the cilium. The protein localises to the cytoskeleton. Its subcellular location is the cilium basal body. In terms of biological role, involved in lineage commitment of primary hemopoietic progenitors by restricting erythroid formation and enhancing myeloid formation. Interferes with erythropoietin-induced erythroid terminal differentiation by preventing cells from exiting the cell cycle through suppression of CDKN1B/p27Kip1 levels. Suppresses COP1 activity via CSN3 which activates p53 and induces cell cycle arrest. Binds DNA and affects the expression of a number of genes so may function as a transcription factor in the nucleus. This is Myeloid leukemia factor 1 (Mlf1) from Mus musculus (Mouse).